A 359-amino-acid polypeptide reads, in one-letter code: Alanine racemase (359 aa).

Residue Lys-34 is the Proton acceptor; specific for D-alanine of the active site. Lys-34 is subject to N6-(pyridoxal phosphate)lysine. Arg-129 serves as a coordination point for substrate. The Proton acceptor; specific for L-alanine role is filled by Tyr-255. Met-303 contacts substrate.

This sequence belongs to the alanine racemase family. Requires pyridoxal 5'-phosphate as cofactor.

The catalysed reaction is L-alanine = D-alanine. Its pathway is amino-acid biosynthesis; D-alanine biosynthesis; D-alanine from L-alanine: step 1/1. Functionally, catalyzes the interconversion of L-alanine and D-alanine. May also act on other amino acids. The chain is Alanine racemase (alr) from Shigella dysenteriae serotype 1 (strain Sd197).